The chain runs to 725 residues: Ribosomal RNA large subunit methyltransferase K/L (725 aa).

Residues 46–157 (VAYRLCLWSR…RGEAVLSLDL (112 aa)) enclose the THUMP domain.

Belongs to the methyltransferase superfamily. RlmKL family.

The protein resides in the cytoplasm. It catalyses the reaction guanosine(2445) in 23S rRNA + S-adenosyl-L-methionine = N(2)-methylguanosine(2445) in 23S rRNA + S-adenosyl-L-homocysteine + H(+). The enzyme catalyses guanosine(2069) in 23S rRNA + S-adenosyl-L-methionine = N(2)-methylguanosine(2069) in 23S rRNA + S-adenosyl-L-homocysteine + H(+). Functionally, specifically methylates the guanine in position 2445 (m2G2445) and the guanine in position 2069 (m7G2069) of 23S rRNA. The sequence is that of Ribosomal RNA large subunit methyltransferase K/L from Ectopseudomonas mendocina (strain ymp) (Pseudomonas mendocina).